The sequence spans 215 residues: Probable transaldolase (215 aa).

The Schiff-base intermediate with substrate role is filled by Lys84.

This sequence belongs to the transaldolase family. Type 3B subfamily.

The protein resides in the cytoplasm. The catalysed reaction is D-sedoheptulose 7-phosphate + D-glyceraldehyde 3-phosphate = D-erythrose 4-phosphate + beta-D-fructose 6-phosphate. It functions in the pathway carbohydrate degradation; pentose phosphate pathway; D-glyceraldehyde 3-phosphate and beta-D-fructose 6-phosphate from D-ribose 5-phosphate and D-xylulose 5-phosphate (non-oxidative stage): step 2/3. Functionally, transaldolase is important for the balance of metabolites in the pentose-phosphate pathway. This Exiguobacterium sibiricum (strain DSM 17290 / CCUG 55495 / CIP 109462 / JCM 13490 / 255-15) protein is Probable transaldolase.